We begin with the raw amino-acid sequence, 220 residues long: Ribosomal RNA large subunit methyltransferase E (220 aa).

The S-adenosyl-L-methionine site is built by Gly64, Trp66, Asp84, Asp100, and Asp125. Lys165 (proton acceptor) is an active-site residue.

This sequence belongs to the class I-like SAM-binding methyltransferase superfamily. RNA methyltransferase RlmE family.

Its subcellular location is the cytoplasm. It catalyses the reaction uridine(2552) in 23S rRNA + S-adenosyl-L-methionine = 2'-O-methyluridine(2552) in 23S rRNA + S-adenosyl-L-homocysteine + H(+). Functionally, specifically methylates the uridine in position 2552 of 23S rRNA at the 2'-O position of the ribose in the fully assembled 50S ribosomal subunit. The chain is Ribosomal RNA large subunit methyltransferase E from Thiobacillus denitrificans (strain ATCC 25259 / T1).